The following is a 978-amino-acid chain: Chaperone protein ClpB2, chloroplastic (978 aa).

The transit peptide at M1–R76 directs the protein to the chloroplast. The 145-residue stretch at T85–K229 folds into the Clp R domain. Repeat stretches follow at residues F89–Q154 and L166–K229. The segment at L244–P492 is i. Residues G289–T296 and G692–T699 contribute to the ATP site. Positions V618 to S809 are II.

This sequence belongs to the ClpA/ClpB family.

The protein localises to the plastid. It is found in the chloroplast. Functionally, molecular chaperone that may play a role in chloroplast development. This chain is Chaperone protein ClpB2, chloroplastic (CLPB2), found in Oryza sativa subsp. japonica (Rice).